A 1339-amino-acid polypeptide reads, in one-letter code: Receptor tyrosine-protein kinase erbB-3 (1339 aa).

The N-terminal stretch at 1–19 is a signal peptide; it reads MSAIGTLQVLGFLLSLARG. At 20–641 the chain is on the extracellular side; sequence SEMGNSQAVC…QAEVLMSKPH (622 aa). An N-linked (GlcNAc...) asparagine glycan is attached at asparagine 126. 11 disulfide bridges follow: cysteine 186/cysteine 194, cysteine 190/cysteine 202, cysteine 210/cysteine 218, cysteine 214/cysteine 226, cysteine 227/cysteine 235, cysteine 231/cysteine 243, cysteine 246/cysteine 255, cysteine 259/cysteine 286, cysteine 290/cysteine 301, cysteine 305/cysteine 320, and cysteine 323/cysteine 327. Asparagine 250 carries N-linked (GlcNAc...) asparagine glycosylation. N-linked (GlcNAc...) asparagine glycans are attached at residues asparagine 353, asparagine 408, asparagine 414, asparagine 437, and asparagine 469. 10 disulfides stabilise this stretch: cysteine 500/cysteine 509, cysteine 504/cysteine 517, cysteine 520/cysteine 529, cysteine 533/cysteine 549, cysteine 552/cysteine 565, cysteine 556/cysteine 573, cysteine 576/cysteine 585, cysteine 589/cysteine 610, cysteine 613/cysteine 621, and cysteine 617/cysteine 629. N-linked (GlcNAc...) asparagine glycosylation occurs at asparagine 522. Asparagine 566 carries N-linked (GlcNAc...) asparagine glycosylation. Asparagine 616 carries an N-linked (GlcNAc...) asparagine glycan. The helical transmembrane segment at 642–662 threads the bilayer; it reads LVIAVTVGLTVIFLILGGSFL. Topologically, residues 663–1339 are cytoplasmic; sequence YWRGRRIQNK…LFPKANAQRI (677 aa). Phosphoserine is present on serine 684. The region spanning 707–964 is the Protein kinase domain; sequence LRKLKVLGSG…TFKELANEFT (258 aa). ATP is bound by residues 713 to 721, lysine 740, 786 to 788, and 832 to 837; these read LGSGVFGTV, QYL, and DLALRN. Aspartate 832 acts as the Proton acceptor in catalysis. Position 980 is a phosphoserine (serine 980). Disordered regions lie at residues 1028–1052, 1077–1156, and 1181–1212; these read LSLP…SGYM, RPIS…GNGY, and SVLG…PRPG. Acidic residues predominate over residues 1185–1195; sequence TEEEDEDEEYE.

It belongs to the protein kinase superfamily. Tyr protein kinase family. EGF receptor subfamily. In terms of assembly, monomer and homodimer. Heterodimer with each of the other ERBB receptors (Potential). Interacts with CSPG5, PA2G4, GRB7 and MUC1. Interacts with MYOC. Found in a ternary complex with NRG1 and ITGAV:ITGB3 or ITGA6:ITGB4. Autophosphorylated. Ligand-binding increases phosphorylation on tyrosine residues and promotes its association with the p85 subunit of phosphatidylinositol 3-kinase. In terms of tissue distribution, in the muscle, expression localizes to the synaptic sites of muscle fibers.

The protein localises to the membrane. It carries out the reaction L-tyrosyl-[protein] + ATP = O-phospho-L-tyrosyl-[protein] + ADP + H(+). Functionally, tyrosine-protein kinase that plays an essential role as cell surface receptor for neuregulins. Binds to neuregulin-1 (NRG1) and is activated by it; ligand-binding increases phosphorylation on tyrosine residues and promotes its association with the p85 subunit of phosphatidylinositol 3-kinase. May also be activated by CSPG5. Involved in the regulation of myeloid cell differentiation. This is Receptor tyrosine-protein kinase erbB-3 (Erbb3) from Mus musculus (Mouse).